We begin with the raw amino-acid sequence, 492 residues long: Aspartyl/glutamyl-tRNA(Asn/Gln) amidotransferase subunit B (492 aa).

This sequence belongs to the GatB/GatE family. GatB subfamily. As to quaternary structure, heterotrimer of A, B and C subunits.

The enzyme catalyses L-glutamyl-tRNA(Gln) + L-glutamine + ATP + H2O = L-glutaminyl-tRNA(Gln) + L-glutamate + ADP + phosphate + H(+). The catalysed reaction is L-aspartyl-tRNA(Asn) + L-glutamine + ATP + H2O = L-asparaginyl-tRNA(Asn) + L-glutamate + ADP + phosphate + 2 H(+). Functionally, allows the formation of correctly charged Asn-tRNA(Asn) or Gln-tRNA(Gln) through the transamidation of misacylated Asp-tRNA(Asn) or Glu-tRNA(Gln) in organisms which lack either or both of asparaginyl-tRNA or glutaminyl-tRNA synthetases. The reaction takes place in the presence of glutamine and ATP through an activated phospho-Asp-tRNA(Asn) or phospho-Glu-tRNA(Gln). In Pelagibacter ubique (strain HTCC1062), this protein is Aspartyl/glutamyl-tRNA(Asn/Gln) amidotransferase subunit B.